Reading from the N-terminus, the 25-residue chain is Ocellatin-L1 (25 aa).

Leucine amide is present on Leu25.

The protein belongs to the frog skin active peptide (FSAP) family. Ocellatin subfamily. Expressed by the skin glands.

The protein localises to the secreted. In terms of biological role, antimicrobial peptide with activity against Gram-negative bacteria but without activity against Gram-positive bacteria. Shows a low activity in stimulating insulin release from rat BRIN-BD11 beta cells, and acts without loss of integrity of the plasma membrane. Has very low hemolytic activity. Shows weak amphipathicity in its alpha-helical conformation. The sequence is that of Ocellatin-L1 from Leptodactylus laticeps (Santa Fe frog).